The sequence spans 273 residues: 4-hydroxy-tetrahydrodipicolinate reductase (273 aa).

11-16 (GAGGRM) provides a ligand contact to NAD(+). Arg-37 lines the NADP(+) pocket. Residues 100–102 (GTT) and 124–127 (AANY) contribute to the NAD(+) site. Residue His-157 is the Proton donor/acceptor of the active site. Residue His-158 participates in (S)-2,3,4,5-tetrahydrodipicolinate binding. The active-site Proton donor is the Lys-161. 167–168 (GT) serves as a coordination point for (S)-2,3,4,5-tetrahydrodipicolinate.

The protein belongs to the DapB family.

The protein localises to the cytoplasm. The enzyme catalyses (S)-2,3,4,5-tetrahydrodipicolinate + NAD(+) + H2O = (2S,4S)-4-hydroxy-2,3,4,5-tetrahydrodipicolinate + NADH + H(+). It catalyses the reaction (S)-2,3,4,5-tetrahydrodipicolinate + NADP(+) + H2O = (2S,4S)-4-hydroxy-2,3,4,5-tetrahydrodipicolinate + NADPH + H(+). The protein operates within amino-acid biosynthesis; L-lysine biosynthesis via DAP pathway; (S)-tetrahydrodipicolinate from L-aspartate: step 4/4. In terms of biological role, catalyzes the conversion of 4-hydroxy-tetrahydrodipicolinate (HTPA) to tetrahydrodipicolinate. The polypeptide is 4-hydroxy-tetrahydrodipicolinate reductase (Acinetobacter baumannii (strain AB307-0294)).